The primary structure comprises 558 residues: Adenine deaminase (558 aa).

The protein belongs to the metallo-dependent hydrolases superfamily. Adenine deaminase family. It depends on Mn(2+) as a cofactor.

The catalysed reaction is adenine + H2O + H(+) = hypoxanthine + NH4(+). This Methanoregula boonei (strain DSM 21154 / JCM 14090 / 6A8) protein is Adenine deaminase.